The sequence spans 158 residues: Urease subunit beta (158 aa).

The segment at 113-158 is disordered; sequence EDDWRRSSAAGDAPQELPQVEAAERGRKLDEATDVGTEDTPEEGQN. Residues 134-143 show a composition bias toward basic and acidic residues; that stretch reads AAERGRKLDE. Acidic residues predominate over residues 144–158; the sequence is ATDVGTEDTPEEGQN.

It belongs to the urease beta subunit family. Heterotrimer of UreA (gamma), UreB (beta) and UreC (alpha) subunits. Three heterotrimers associate to form the active enzyme.

The protein resides in the cytoplasm. The catalysed reaction is urea + 2 H2O + H(+) = hydrogencarbonate + 2 NH4(+). Its pathway is nitrogen metabolism; urea degradation; CO(2) and NH(3) from urea (urease route): step 1/1. The chain is Urease subunit beta from Corynebacterium glutamicum (strain R).